Reading from the N-terminus, the 356-residue chain is MTSQAALKLVAKEEGDKQRALEAALAQIDRAFGKGSVMKLGEKGKVEIESVSTGSLGLDIALGIGGLPKGRIVEVYGPESSGKTTLALHVVAEVQKAGGTAAFVDAEHALDPSYAYKLGVNLDNLLVSQPDNGEQALEITDTLVRSGAVDIVVVDSVAALTPKAEIEGEMGDSLPGLQARLMSQALRKLTASINKANTIVIFINQIRHKIGVMYGSPETTTGGNALKFYASVRLDIRRTGSVKARDEIVGNNVRVKVVKNKVAPPFREVEFDIMYGEGISKLGEVIDLGVKAGIIDKAGSWFSYGSQRIGQGRDNVREFLKNNPDVAADIEKAVRKSSQKIEEELLVGGPEEGEED.

ATP is bound at residue Gly-77 to Thr-84.

Belongs to the RecA family.

It is found in the cytoplasm. Can catalyze the hydrolysis of ATP in the presence of single-stranded DNA, the ATP-dependent uptake of single-stranded DNA by duplex DNA, and the ATP-dependent hybridization of homologous single-stranded DNAs. It interacts with LexA causing its activation and leading to its autocatalytic cleavage. In Caulobacter vibrioides (strain ATCC 19089 / CIP 103742 / CB 15) (Caulobacter crescentus), this protein is Protein RecA.